Consider the following 335-residue polypeptide: Tetraacyldisaccharide 4'-kinase (335 aa).

Position 51–58 (51–58 (HVGGAGKT)) interacts with ATP.

Belongs to the LpxK family.

The enzyme catalyses a lipid A disaccharide + ATP = a lipid IVA + ADP + H(+). The protein operates within glycolipid biosynthesis; lipid IV(A) biosynthesis; lipid IV(A) from (3R)-3-hydroxytetradecanoyl-[acyl-carrier-protein] and UDP-N-acetyl-alpha-D-glucosamine: step 6/6. In terms of biological role, transfers the gamma-phosphate of ATP to the 4'-position of a tetraacyldisaccharide 1-phosphate intermediate (termed DS-1-P) to form tetraacyldisaccharide 1,4'-bis-phosphate (lipid IVA). This is Tetraacyldisaccharide 4'-kinase from Bradyrhizobium sp. (strain ORS 278).